We begin with the raw amino-acid sequence, 168 residues long: Transcriptional regulator MraZ (168 aa).

SpoVT-AbrB domains follow at residues 8–51 (EYNQ…GGDR) and 90–140 (ALNM…KADI).

It belongs to the MraZ family. In terms of assembly, forms oligomers.

It is found in the cytoplasm. The protein resides in the nucleoid. This Cereibacter sphaeroides (strain KD131 / KCTC 12085) (Rhodobacter sphaeroides) protein is Transcriptional regulator MraZ.